Consider the following 278-residue polypeptide: Potassium/proton antiporter CemA (278 aa).

4 helical membrane passes run 61-81 (LIVL…FIIG), 155-175 (AIKN…LIVL), 203-223 (IILF…EVVI), and 238-258 (FIFL…KYWI).

The protein belongs to the CemA family.

Its subcellular location is the plastid. It localises to the chloroplast inner membrane. It carries out the reaction K(+)(in) + H(+)(out) = K(+)(out) + H(+)(in). In terms of biological role, contributes to K(+)/H(+) antiport activity by supporting proton efflux to control proton extrusion and homeostasis in chloroplasts in a light-dependent manner to modulate photosynthesis. Prevents excessive induction of non-photochemical quenching (NPQ) under continuous-light conditions. Indirectly promotes efficient inorganic carbon uptake into chloroplasts. This Cyanidium caldarium (Red alga) protein is Potassium/proton antiporter CemA.